A 205-amino-acid polypeptide reads, in one-letter code: Rho-related GTP-binding protein RhoQ (205 aa).

Residue 16–23 (GDGAVGKT) participates in GTP binding. The Effector region motif lies at 38–46 (YVPTVFDHY). Residues 63 to 67 (DTAGQ) and 121 to 124 (TQID) contribute to the GTP site. Cysteine 202 carries the cysteine methyl ester modification. Cysteine 202 carries the S-farnesyl cysteine lipid modification. Residues 203–205 (LIT) constitute a propeptide, removed in mature form.

The protein belongs to the small GTPase superfamily. Rho family. As to quaternary structure, interacts with EXO70, CDC42EP1, CDC42EP2 and CDC42EP3 in a GTP-dependent manner. Interacts with CDC42EP4, PARD6A, PARD6G (and probably PARD6B) in a GTP-dependent manner. Part of a quaternary complex containing PARD3, some PARD6 protein (PARD6A, PARD6B or PARD6G) and some atypical PKC protein (PRKCI or PRKCZ). Interacts with GOPC. Interacts with ARHGAP33/TCGAP. Post-translationally, may be post-translationally modified by both palmitoylation and polyisoprenylation.

The protein resides in the cytoplasm. Its subcellular location is the cell membrane. Regulated by guanine nucleotide exchange factors (GEFs) which promote the exchange of bound GDP for free GTP, GTPase activating proteins (GAPs) which increase the GTP hydrolysis activity, and GDP dissociation inhibitors which inhibit the dissociation of the nucleotide from the GTPase. Its function is as follows. Plasma membrane-associated small GTPase which cycles between an active GTP-bound and an inactive GDP-bound state. In active state binds to a variety of effector proteins to regulate cellular responses. Involved in epithelial cell polarization processes. May play a role in CFTR trafficking to the plasma membrane. Causes the formation of thin, actin-rich surface projections called filopodia. The protein is Rho-related GTP-binding protein RhoQ (Rhoq) of Mus musculus (Mouse).